A 407-amino-acid chain; its full sequence is MSGGSADYSRDHGGPEGMEPDGVIESNWNEIVDNFDDMNLKESLLRGIYAYGFEKPSAIQQRAIIPCIKGYDVIAQAQSGTGKTATFAISILQQLEIDLKETQALVLAPTRELAQQIQKVILALGDYMGATCHACIGGTNVRNEMQKLQAEAPHIVVGTPGRVFDMLNRRYLSPKWIKMFVLDEADEMLSRGFKDQIYEIFQKLSTNIQVVLLSATMPMDVLEVTKKFMREPIRILVKKEELTLEGIKQFYINVEREEWKLDTLCDLYETLTITQAVIFLNTRRKVDWLTEKMHARDFTVSALHGDMDQKERDVIMREFRSGSSRVLITTDLLARGIDVQQVSLVINYDLPTNRENYIHRIGRGGRFGRKGVAINFVTEEDKRILRDIETFYNTTVEEMPMNVADLI.

The tract at residues 1-23 is disordered; that stretch reads MSGGSADYSRDHGGPEGMEPDGV. The short motif at 33 to 61 is the Q motif element; the sequence is DNFDDMNLKESLLRGIYAYGFEKPSAIQQ. Residues 64–235 form the Helicase ATP-binding domain; sequence IIPCIKGYDV…KKFMREPIRI (172 aa). 77-84 contacts ATP; sequence AQSGTGKT. The short motif at 183-186 is the DEAD box element; the sequence is DEAD. Positions 246 to 407 constitute a Helicase C-terminal domain; the sequence is GIKQFYINVE…EMPMNVADLI (162 aa).

This sequence belongs to the DEAD box helicase family. eIF4A subfamily. As to quaternary structure, eIF4F is a multi-subunit complex, the composition of which varies with external and internal environmental conditions. It is composed of at least EIF4A, EIF4E and EIF4G1/EIFFG3. Interacts with EIF4E.

It carries out the reaction ATP + H2O = ADP + phosphate + H(+). In terms of biological role, ATP-dependent RNA helicase which is a subunit of the eIF4F complex involved in cap recognition and is required for mRNA binding to ribosome. In the current model of translation initiation, eIF4A unwinds RNA secondary structures in the 5'-UTR of mRNAs which is necessary to allow efficient binding of the small ribosomal subunit, and subsequent scanning for the initiator codon. The protein is Eukaryotic initiation factor 4A-II (EIF4A2) of Gallus gallus (Chicken).